A 329-amino-acid polypeptide reads, in one-letter code: Lipoyl synthase (329 aa).

[4Fe-4S] cluster is bound by residues C55, C60, C66, C81, C85, C88, and S292. Residues 67 to 281 (WEDREATFLI…KAEAEAIGFL (215 aa)) form the Radical SAM core domain.

It belongs to the radical SAM superfamily. Lipoyl synthase family. [4Fe-4S] cluster serves as cofactor.

The protein localises to the cytoplasm. It carries out the reaction [[Fe-S] cluster scaffold protein carrying a second [4Fe-4S](2+) cluster] + N(6)-octanoyl-L-lysyl-[protein] + 2 oxidized [2Fe-2S]-[ferredoxin] + 2 S-adenosyl-L-methionine + 4 H(+) = [[Fe-S] cluster scaffold protein] + N(6)-[(R)-dihydrolipoyl]-L-lysyl-[protein] + 4 Fe(3+) + 2 hydrogen sulfide + 2 5'-deoxyadenosine + 2 L-methionine + 2 reduced [2Fe-2S]-[ferredoxin]. It functions in the pathway protein modification; protein lipoylation via endogenous pathway; protein N(6)-(lipoyl)lysine from octanoyl-[acyl-carrier-protein]: step 2/2. Functionally, catalyzes the radical-mediated insertion of two sulfur atoms into the C-6 and C-8 positions of the octanoyl moiety bound to the lipoyl domains of lipoate-dependent enzymes, thereby converting the octanoylated domains into lipoylated derivatives. This is Lipoyl synthase from Clavibacter sepedonicus (Clavibacter michiganensis subsp. sepedonicus).